Here is a 269-residue protein sequence, read N- to C-terminus: uncharacterized protein (269 aa).

The span at 181–191 (QKKELSPHEIA) shows a compositional bias: basic and acidic residues. The segment at 181–203 (QKKELSPHEIAESPSSHSTSPMG) is disordered. Over residues 193–202 (SPSSHSTSPM) the composition is skewed to polar residues. At serine 200 the chain carries Phosphoserine.

This is an uncharacterized protein from Schizosaccharomyces pombe (strain 972 / ATCC 24843) (Fission yeast).